A 288-amino-acid chain; its full sequence is Glycine--tRNA ligase alpha subunit (288 aa).

This sequence belongs to the class-II aminoacyl-tRNA synthetase family. In terms of assembly, tetramer of two alpha and two beta subunits.

It is found in the cytoplasm. The enzyme catalyses tRNA(Gly) + glycine + ATP = glycyl-tRNA(Gly) + AMP + diphosphate. In Rickettsia massiliae (strain Mtu5), this protein is Glycine--tRNA ligase alpha subunit.